Here is a 93-residue protein sequence, read N- to C-terminus: Molybdopterin synthase sulfur carrier subunit (93 aa).

1-thioglycine; alternate is present on Gly-93. Residue Gly-93 is modified to Glycyl adenylate; alternate.

Belongs to the MoaD family. MOCS2A subfamily. In terms of assembly, heterotetramer; composed of 2 small (MOCS2A) and 2 large (MOCS2B) subunits. C-terminal thiocarboxylation occurs in 2 steps, it is first acyl-adenylated (-COAMP) via the hesA/moeB/thiF part of UBA4, then thiocarboxylated (-COSH) via the rhodanese domain of UBA4.

The protein localises to the cytoplasm. The protein operates within cofactor biosynthesis; molybdopterin biosynthesis. Acts as a sulfur carrier required for molybdopterin biosynthesis. Component of the molybdopterin synthase complex that catalyzes the conversion of precursor Z into molybdopterin by mediating the incorporation of 2 sulfur atoms into precursor Z to generate a dithiolene group. In the complex, serves as sulfur donor by being thiocarboxylated (-COSH) at its C-terminus by UBA4. After interaction with MOCS2B, the sulfur is then transferred to precursor Z to form molybdopterin. The polypeptide is Molybdopterin synthase sulfur carrier subunit (Mycosarcoma maydis (Corn smut fungus)).